We begin with the raw amino-acid sequence, 213 residues long: Putative manganese efflux pump MntP (213 aa).

6 helical membrane-spanning segments follow: residues 3–23 (ILSI…VSVA), 36–56 (ALKV…IGWG), 67–87 (AFDH…MIFE), 130–150 (LAIA…FLGI), 152–172 (IVQT…LGVI), and 187–207 (IVGG…HTGI).

This sequence belongs to the MntP (TC 9.B.29) family.

It localises to the cell membrane. Its function is as follows. Probably functions as a manganese efflux pump. The chain is Putative manganese efflux pump MntP from Clostridium perfringens (strain ATCC 13124 / DSM 756 / JCM 1290 / NCIMB 6125 / NCTC 8237 / Type A).